Here is a 178-residue protein sequence, read N- to C-terminus: Large ribosomal subunit protein bL25 (178 aa).

Belongs to the bacterial ribosomal protein bL25 family. CTC subfamily. Part of the 50S ribosomal subunit; part of the 5S rRNA/L5/L18/L25 subcomplex. Contacts the 5S rRNA. Binds to the 5S rRNA independently of L5 and L18.

Functionally, this is one of the proteins that binds to the 5S RNA in the ribosome where it forms part of the central protuberance. In Helicobacter hepaticus (strain ATCC 51449 / 3B1), this protein is Large ribosomal subunit protein bL25.